The primary structure comprises 24 residues: Pyruvate kinase (24 aa).

Belongs to the pyruvate kinase family. As to quaternary structure, homotetramer. Mg(2+) is required as a cofactor. The cofactor is K(+).

It catalyses the reaction pyruvate + ATP = phosphoenolpyruvate + ADP + H(+). The protein operates within carbohydrate degradation; glycolysis; pyruvate from D-glyceraldehyde 3-phosphate: step 5/5. In Clostridium pasteurianum, this protein is Pyruvate kinase (pyk).